Here is a 221-residue protein sequence, read N- to C-terminus: ATP-dependent dethiobiotin synthetase BioD (221 aa).

11–16 contacts ATP; it reads DVGKTF. Threonine 15 contributes to the Mg(2+) binding site. Lysine 35 is a catalytic residue. Threonine 39 is a substrate binding site. Residues aspartate 44 and 103–106 each bind ATP; that span reads EGAG. 2 residues coordinate Mg(2+): aspartate 44 and glutamate 103.

The protein belongs to the dethiobiotin synthetase family. Homodimer. Requires Mg(2+) as cofactor.

The protein localises to the cytoplasm. It carries out the reaction (7R,8S)-7,8-diammoniononanoate + CO2 + ATP = (4R,5S)-dethiobiotin + ADP + phosphate + 3 H(+). It participates in cofactor biosynthesis; biotin biosynthesis; biotin from 7,8-diaminononanoate: step 1/2. Functionally, catalyzes a mechanistically unusual reaction, the ATP-dependent insertion of CO2 between the N7 and N8 nitrogen atoms of 7,8-diaminopelargonic acid (DAPA, also called 7,8-diammoniononanoate) to form a ureido ring. The sequence is that of ATP-dependent dethiobiotin synthetase BioD from Leptospira interrogans serogroup Icterohaemorrhagiae serovar copenhageni (strain Fiocruz L1-130).